Consider the following 122-residue polypeptide: Large ribosomal subunit protein uL14 (122 aa).

The protein belongs to the universal ribosomal protein uL14 family. As to quaternary structure, part of the 50S ribosomal subunit. Forms a cluster with proteins L3 and L19. In the 70S ribosome, L14 and L19 interact and together make contacts with the 16S rRNA in bridges B5 and B8.

Functionally, binds to 23S rRNA. Forms part of two intersubunit bridges in the 70S ribosome. The polypeptide is Large ribosomal subunit protein uL14 (Mycobacterium sp. (strain KMS)).